The following is a 424-amino-acid chain: Glutamate-1-semialdehyde 2,1-aminomutase (424 aa).

Lys263 carries the post-translational modification N6-(pyridoxal phosphate)lysine.

Belongs to the class-III pyridoxal-phosphate-dependent aminotransferase family. HemL subfamily. In terms of assembly, homodimer. Pyridoxal 5'-phosphate is required as a cofactor.

It localises to the cytoplasm. It catalyses the reaction (S)-4-amino-5-oxopentanoate = 5-aminolevulinate. The protein operates within porphyrin-containing compound metabolism; protoporphyrin-IX biosynthesis; 5-aminolevulinate from L-glutamyl-tRNA(Glu): step 2/2. The protein is Glutamate-1-semialdehyde 2,1-aminomutase of Campylobacter jejuni subsp. jejuni serotype O:2 (strain ATCC 700819 / NCTC 11168).